We begin with the raw amino-acid sequence, 160 residues long: Cytochrome b6-f complex subunit 4 (160 aa).

3 helical membrane passes run Leu36–Val56, Leu95–Glu115, and Leu131–Ile151.

The protein belongs to the cytochrome b family. PetD subfamily. The 4 large subunits of the cytochrome b6-f complex are cytochrome b6, subunit IV (17 kDa polypeptide, petD), cytochrome f and the Rieske protein, while the 4 small subunits are petG, petL, petM and petN. The complex functions as a dimer.

Its subcellular location is the plastid. The protein localises to the chloroplast thylakoid membrane. Functionally, component of the cytochrome b6-f complex, which mediates electron transfer between photosystem II (PSII) and photosystem I (PSI), cyclic electron flow around PSI, and state transitions. The chain is Cytochrome b6-f complex subunit 4 from Emiliania huxleyi (Coccolithophore).